Here is a 120-residue protein sequence, read N- to C-terminus: MFKKIDKNANRVKRHLRIRKNLTGTSEKPRLCVFKSNTNIYAQLIDDVNHNTLVAASTLDKDFSGESKSNKEAAKLVGELIGKKAIDKGIEQCVFDRSGYLYHGKVKELAEGARSAGLKF.

This sequence belongs to the universal ribosomal protein uL18 family. In terms of assembly, part of the 50S ribosomal subunit; part of the 5S rRNA/L5/L18/L25 subcomplex. Contacts the 5S and 23S rRNAs.

In terms of biological role, this is one of the proteins that bind and probably mediate the attachment of the 5S RNA into the large ribosomal subunit, where it forms part of the central protuberance. This is Large ribosomal subunit protein uL18 from Finegoldia magna (strain ATCC 29328 / DSM 20472 / WAL 2508) (Peptostreptococcus magnus).